We begin with the raw amino-acid sequence, 778 residues long: Endonuclease MutS2 (778 aa).

328-335 serves as a coordination point for ATP; that stretch reads GPNTGGKT. Residues 702 to 777 form the Smr domain; sequence LDLRGKRYEE…GSGATIVTFK (76 aa).

This sequence belongs to the DNA mismatch repair MutS family. MutS2 subfamily. Homodimer. Binds to stalled ribosomes, contacting rRNA.

In terms of biological role, endonuclease that is involved in the suppression of homologous recombination and thus may have a key role in the control of bacterial genetic diversity. Its function is as follows. Acts as a ribosome collision sensor, splitting the ribosome into its 2 subunits. Detects stalled/collided 70S ribosomes which it binds and splits by an ATP-hydrolysis driven conformational change. Acts upstream of the ribosome quality control system (RQC), a ribosome-associated complex that mediates the extraction of incompletely synthesized nascent chains from stalled ribosomes and their subsequent degradation. Probably generates substrates for RQC. The protein is Endonuclease MutS2 of Streptococcus pneumoniae (strain JJA).